The primary structure comprises 216 residues: Cytochrome c biogenesis ATP-binding export protein CcmA (216 aa).

In terms of domain architecture, ABC transporter spans 11-216 (LSANELTCIR…RKITLDYRFV (206 aa)). An ATP-binding site is contributed by 43–50 (GPNGAGKT).

Belongs to the ABC transporter superfamily. CcmA exporter (TC 3.A.1.107) family. As to quaternary structure, the complex is composed of two ATP-binding proteins (CcmA) and two transmembrane proteins (CcmB).

The protein resides in the cell inner membrane. It catalyses the reaction heme b(in) + ATP + H2O = heme b(out) + ADP + phosphate + H(+). Part of the ABC transporter complex CcmAB involved in the biogenesis of c-type cytochromes; once thought to export heme, this seems not to be the case, but its exact role is uncertain. Responsible for energy coupling to the transport system. This Shewanella frigidimarina (strain NCIMB 400) protein is Cytochrome c biogenesis ATP-binding export protein CcmA.